The following is a 425-amino-acid chain: Gamma-glutamyl phosphate reductase (425 aa).

It belongs to the gamma-glutamyl phosphate reductase family.

It is found in the cytoplasm. It carries out the reaction L-glutamate 5-semialdehyde + phosphate + NADP(+) = L-glutamyl 5-phosphate + NADPH + H(+). The protein operates within amino-acid biosynthesis; L-proline biosynthesis; L-glutamate 5-semialdehyde from L-glutamate: step 2/2. Catalyzes the NADPH-dependent reduction of L-glutamate 5-phosphate into L-glutamate 5-semialdehyde and phosphate. The product spontaneously undergoes cyclization to form 1-pyrroline-5-carboxylate. This is Gamma-glutamyl phosphate reductase from Opitutus terrae (strain DSM 11246 / JCM 15787 / PB90-1).